Here is a 410-residue protein sequence, read N- to C-terminus: 3-phosphoshikimate 1-carboxyvinyltransferase (410 aa).

3-phosphoshikimate is bound by residues Lys20, Ser21, and Arg25. Residue Lys20 participates in phosphoenolpyruvate binding. Arg115 lines the phosphoenolpyruvate pocket. 6 residues coordinate 3-phosphoshikimate: Ser157, Ser158, Gln159, Ser183, Asp293, and Lys320. Residue Gln159 coordinates phosphoenolpyruvate. Catalysis depends on Asp293, which acts as the Proton acceptor. 3 residues coordinate phosphoenolpyruvate: Arg324, Arg365, and Lys391.

This sequence belongs to the EPSP synthase family. In terms of assembly, monomer.

It is found in the cytoplasm. The catalysed reaction is 3-phosphoshikimate + phosphoenolpyruvate = 5-O-(1-carboxyvinyl)-3-phosphoshikimate + phosphate. Its pathway is metabolic intermediate biosynthesis; chorismate biosynthesis. Catalyzes the transfer of the enolpyruvyl moiety of phosphoenolpyruvate (PEP) to the 5-hydroxyl of shikimate-3-phosphate (S3P) to produce enolpyruvyl shikimate-3-phosphate and inorganic phosphate. The polypeptide is 3-phosphoshikimate 1-carboxyvinyltransferase (Thermoplasma acidophilum (strain ATCC 25905 / DSM 1728 / JCM 9062 / NBRC 15155 / AMRC-C165)).